Reading from the N-terminus, the 498-residue chain is Calcitonin receptor (498 aa).

An N-terminal signal peptide occupies residues 1-29 (MRFTLTRWCLTLFIFLNRPLPVLPDSADG). Topologically, residues 30–147 (AHTPTLEPEP…FTPDKLQNAY (118 aa)) are extracellular. Cystine bridges form between C56–C82, C73–C113, and C96–C135. Residues N74, N126, and N131 are each glycosylated (N-linked (GlcNAc...) asparagine). A helical transmembrane segment spans residues 148-170 (ILYYLAIVGHSLSILTLLISLGI). The Cytoplasmic portion of the chain corresponds to 171–198 (FMFLRYFNLLAPFNALLYPTRSISCQRV). A helical membrane pass occupies residues 199 to 219 (TLHKNMFLTYVLNSIIIIVHL). Residues 220 to 236 (VVIVPNGELVKRDPPIC) lie on the Extracellular side of the membrane. C236 and C306 are disulfide-bonded. Residues 237–259 (KVLHFFHQYMMSCNYFWMLCEGV) traverse the membrane as a helical segment. Residues 260 to 276 (YLHTLIVVSVFAEGQRL) lie on the Cytoplasmic side of the membrane. Residues 277 to 297 (WWYHVLGWGFPLIPTTAHAIT) form a helical membrane-spanning segment. The Extracellular portion of the chain corresponds to 298-313 (RAVLFNDNCWLSVDTN). The chain crosses the membrane as a helical span at residues 314-337 (LLYIIHGPVMAALVVNFFFLLNIL). Over 338–357 (RVLVKKLKESQEAESHMYLK) the chain is Cytoplasmic. Residues 358–376 (AVRATLILVPLLGVQFVVL) traverse the membrane as a helical segment. Over 377 to 384 (PWRPSTPL) the chain is Extracellular. Residues 385-411 (LGKIYDYVVHSLIHFQGFFVAIIYCFC) form a helical membrane-spanning segment. Residues 412–498 (NHEVQGALKR…MEVLEQETSA (87 aa)) lie on the Cytoplasmic side of the membrane.

This sequence belongs to the G-protein coupled receptor 2 family. In terms of assembly, heterodimer of CALCR and RAMP1, RAMP2 or RAMP3; the receptor complexes function as AMYR1, AMYR2 and AMYR3 receptors, respectively, and respond to amylin/IAPP, calcitonin/CT and CGRP1 ligands. Interacts with GPRASP2.

It localises to the cell membrane. G protein-coupled receptor activated by ligand peptides amylin (IAPP), calcitonin (CT/CALCA) and calcitonin gene-related peptide type 1 (CGRP1/CALCA). CALCR interacts with receptor-activity-modifying proteins RAMP1, 2 and 3 to form receptor complexes AMYR1, 2 and 3, respectively. IAPP, CT and CGRP1 activate CALCR and AMYRs with distinct modes of receptor activation resulting in specific phenotypes. Ligand binding causes a conformation change that triggers signaling via guanine nucleotide-binding proteins (G proteins) and modulates the activity of downstream effectors. Activates cAMP-dependent pathway. This Sus scrofa (Pig) protein is Calcitonin receptor.